Reading from the N-terminus, the 703-residue chain is Stonustoxin subunit alpha (703 aa).

The interval S2–N265 is structural MACPF/CDC pore-forming domain. Positions V266–F385 are structural FAT domain. A thioredoxin (THX) domain region spans residues V386–K517. The B30.2/SPRY domain occupies P508–L703.

This sequence belongs to the SNTX/VTX toxin family. In terms of assembly, heterodimer of alpha and beta subunits; non-covalently linked. Intrachain disulfide bonds may be present in the heterodimer. In terms of processing, not glycosylated. Expressed by the venom gland.

Its subcellular location is the secreted. Its function is as follows. This lethal (towards mammals) heterodimer induces hemolytic activities due to its ability to form pores in the cell membrane. The pore may be composed of 10 SNTX-alpha/beta heterodimers. The toxin elicits potent hypotension which is endothelium-dependent and appears to be mediated by the nitric oxide pathway and activation of potassium channels. In addition, it displays edema-inducing activities, increases vascular permeability. It also shows myotoxic activities and interferes irreversibly with neuromuscular function. It also induces irreversible platelet aggregation in rabbit or rat (but not in human or mouse) whole blood. In addition, it has been observed to increase spontaneous quantal acetylcholine release from isolated frog cutaneous pectoris motor endings. The sequence is that of Stonustoxin subunit alpha from Synanceia horrida (Estuarine stonefish).